A 20-amino-acid chain; its full sequence is Brevinin-1LT (20 aa).

A disulfide bridge links cysteine 14 with cysteine 20.

Expressed by the skin glands.

Its subcellular location is the secreted. Functionally, antimicrobial peptide. This Rana latastei (Italian agile frog) protein is Brevinin-1LT.